The sequence spans 313 residues: Formimidoylglutamase (313 aa).

Residues H130, D155, H157, D159, D241, and D243 each coordinate Mn(2+).

It belongs to the arginase family. The cofactor is Mn(2+).

It carries out the reaction N-formimidoyl-L-glutamate + H2O = formamide + L-glutamate. The protein operates within amino-acid degradation; L-histidine degradation into L-glutamate; L-glutamate from N-formimidoyl-L-glutamate (hydrolase route): step 1/1. Functionally, catalyzes the conversion of N-formimidoyl-L-glutamate to L-glutamate and formamide. This Salmonella typhi protein is Formimidoylglutamase.